Consider the following 249-residue polypeptide: Tetrahydromethanopterin S-methyltransferase subunit D (249 aa).

The next 6 helical transmembrane spans lie at 9 to 29 (ILWL…VHFV), 47 to 67 (GTVQ…GFMM), 75 to 95 (LILA…MIVG), 138 to 158 (VSFV…ALVY), 183 to 203 (LVGI…VIPS), and 224 to 244 (AVIS…IAIS).

This sequence belongs to the MtrD family. As to quaternary structure, the complex is composed of 8 subunits; MtrA, MtrB, MtrC, MtrD, MtrE, MtrF, MtrG and MtrH.

Its subcellular location is the cell membrane. The enzyme catalyses 5-methyl-5,6,7,8-tetrahydromethanopterin + coenzyme M + 2 Na(+)(in) = 5,6,7,8-tetrahydromethanopterin + methyl-coenzyme M + 2 Na(+)(out). The protein operates within one-carbon metabolism; methanogenesis from CO(2); methyl-coenzyme M from 5,10-methylene-5,6,7,8-tetrahydromethanopterin: step 2/2. Part of a complex that catalyzes the formation of methyl-coenzyme M and tetrahydromethanopterin from coenzyme M and methyl-tetrahydromethanopterin. This is an energy-conserving, sodium-ion translocating step. This is Tetrahydromethanopterin S-methyltransferase subunit D from Methanosarcina acetivorans (strain ATCC 35395 / DSM 2834 / JCM 12185 / C2A).